The primary structure comprises 353 residues: MSVLSDLINLNLSDTTEKIIAEYIWVGGSGVDLRSKARTLSGPVNDPSKLPKWNYDGSSTGQAPGKDSEVILWPQAIFKDPFRRGNNILVMCDTYTPAGEPIPTNKRHAAAKIFSHPDVVAEEPWFGIEQEYTLLQKDIHWPIGWPLGGFPGPQGPYYCGTGAEKAFGRDIVDSHYKACLYAGINISGINAEVMPGQWEFQVGPSVGISAGDELWVARYILERITEIAGVVLSLDPKPIPGDWNGAGAHTNYSTKSMRNDGGYEVIKKAIEKLGKRHNEHIAAYGEGNERRLTGRHETADISTFFWGVANRGASIRVGRDTEKEGKGYFEDRRPASNMDPYVVTSMIAETTLL.

Positions 19 to 99 constitute a GS beta-grasp domain; the sequence is IIAEYIWVGG…VMCDTYTPAG (81 aa). One can recognise a GS catalytic domain in the interval 106–353; it reads KRHAAAKIFS…TSMIAETTLL (248 aa).

The protein belongs to the glutamine synthetase family. Homooctamer.

It localises to the cytoplasm. It catalyses the reaction L-glutamate + NH4(+) + ATP = L-glutamine + ADP + phosphate + H(+). This Lupinus luteus (European yellow lupine) protein is Glutamine synthetase nodule isozyme.